The primary structure comprises 623 residues: V-type proton ATPase catalytic subunit A (623 aa).

ATP is bound at residue 252-259 (GAFGCGKT).

The protein belongs to the ATPase alpha/beta chains family. In terms of assembly, V-ATPase is a heteromultimeric enzyme composed of a peripheral catalytic V1 complex (main components: subunits A, B, C, D, E, and F) attached to an integral membrane V0 proton pore complex (main component: the proteolipid protein).

The catalysed reaction is ATP + H2O + 4 H(+)(in) = ADP + phosphate + 5 H(+)(out). In terms of biological role, catalytic subunit of the peripheral V1 complex of vacuolar ATPase. V-ATPase vacuolar ATPase is responsible for acidifying a variety of intracellular compartments in eukaryotic cells. The sequence is that of V-type proton ATPase catalytic subunit A from Beta vulgaris (Sugar beet).